The chain runs to 161 residues: MKLAVYPGSFDPVTNGHIDILEKSSKIFDEIIVAVIHNVTKKALFSLDERVKLIEESTRHLNNVRVDAFSGLLANYLADKQACAIIRGLRTVTDFEYEMHMAMMNKKLIPNIDTMFFMSDSQYTFISSSAVKEAALLGGDVGSLVPAVVKAGLEEKMLNDG.

Serine 9 contributes to the substrate binding site. ATP contacts are provided by residues 9–10 (SF) and histidine 17. The substrate site is built by lysine 41, leucine 73, and arginine 87. Residues 88 to 90 (GLR), glutamate 98, and 123 to 129 (YTFISSS) contribute to the ATP site.

It belongs to the bacterial CoaD family. Homohexamer. It depends on Mg(2+) as a cofactor.

It localises to the cytoplasm. The enzyme catalyses (R)-4'-phosphopantetheine + ATP + H(+) = 3'-dephospho-CoA + diphosphate. It functions in the pathway cofactor biosynthesis; coenzyme A biosynthesis; CoA from (R)-pantothenate: step 4/5. Functionally, reversibly transfers an adenylyl group from ATP to 4'-phosphopantetheine, yielding dephospho-CoA (dPCoA) and pyrophosphate. The chain is Phosphopantetheine adenylyltransferase from Syntrophomonas wolfei subsp. wolfei (strain DSM 2245B / Goettingen).